Consider the following 598-residue polypeptide: Elongation factor 4 (598 aa).

The tr-type G domain maps to 2–184; sequence QHIRNFSIIA…AIVARVPAPK (183 aa). GTP-binding positions include 14–19 and 131–134; these read DHGKST and NKID.

The protein belongs to the TRAFAC class translation factor GTPase superfamily. Classic translation factor GTPase family. LepA subfamily.

It localises to the cell inner membrane. The enzyme catalyses GTP + H2O = GDP + phosphate + H(+). Functionally, required for accurate and efficient protein synthesis under certain stress conditions. May act as a fidelity factor of the translation reaction, by catalyzing a one-codon backward translocation of tRNAs on improperly translocated ribosomes. Back-translocation proceeds from a post-translocation (POST) complex to a pre-translocation (PRE) complex, thus giving elongation factor G a second chance to translocate the tRNAs correctly. Binds to ribosomes in a GTP-dependent manner. The polypeptide is Elongation factor 4 (Azoarcus sp. (strain BH72)).